The primary structure comprises 663 residues: MNFNSTNPYYFTHEKNLNNASKYSELPIAYQEIPLQSLPPYPKVASKLKGVVAGGKENNIASFQKPSSKATRPYIPSYTRLTYSVPPLPIPPPSEQSLDTIIYRNPSVSSSQSQEPEEFFLPLDDGKKPPYSYAMLIGMSIIRSPDRRLTLSAIYDWISNTFSFYNKSNNGWQNSIRHNLSLNKAFMKIERPRNLPGKGHFWSIRPGHEEQFLKLKLRKPGVNSRPAPPVQDVTSSTKYGSSTGSSGFNTFNTSPHIFNQRHQYLQNYYTASLTNIPTISNVNATNFHPLHSQQPYVDTPGIDAPSDLEAKFSDLGVSSVVSVTSPLQSCTNSPSPPLSSPASSASPSESLRNESLGIKSAKSLGLNKDDAPVEGPPVSHLEKDVETPSVHDSVLGFNDTVTNLGKKGLKDGTTNTLQIPAVRLPSLPSSPTIKNPSGLLLKRSNSIDFPTPPKALCPKLFCFRDDIVADDYTKFSLLSPIRSDMSGISASPNTNLKEHRTRILQMLATPDAKQLSSLTSSDAEFWSVTPLKSSILRNGDASKQVTLSESPKGDSLLDGGSLSYFTNNISSVAGLETPSKLPMSKSFDTFEDDFLDPMDMLSFENHFSDFNSNRKVSPVKREVRRKYISSATTIHSSAAQDDTYLPSPTKRKMPLLRQTSTLF.

Residues 128 to 222 (KPPYSYAMLI…LKLKLRKPGV (95 aa)) constitute a DNA-binding region (fork-head). 2 disordered regions span residues 220–241 (PGVN…KYGS) and 325–387 (SPLQ…DVET). Residues 340–355 (SPASSASPSESLRNES) are compositionally biased toward low complexity. Residue serine 446 is modified to Phosphoserine.

The protein localises to the nucleus. In terms of biological role, required for promoter sequence element PCB-driven, M-phase-specific transcription. Acts as a transcriptional activator with a role in the regulation of mitosis. Regulates septation and the periodic transcription of cdc15. This is Forkhead protein sep1 (sep1) from Schizosaccharomyces pombe (strain 972 / ATCC 24843) (Fission yeast).